The primary structure comprises 316 residues: 4-diphosphocytidyl-2-C-methyl-D-erythritol kinase (316 aa).

K32 is an active-site residue. 126–136 is a binding site for ATP; that stretch reads PVGAGLGGGSA. D168 is a catalytic residue.

The protein belongs to the GHMP kinase family. IspE subfamily.

The catalysed reaction is 4-CDP-2-C-methyl-D-erythritol + ATP = 4-CDP-2-C-methyl-D-erythritol 2-phosphate + ADP + H(+). The protein operates within isoprenoid biosynthesis; isopentenyl diphosphate biosynthesis via DXP pathway; isopentenyl diphosphate from 1-deoxy-D-xylulose 5-phosphate: step 3/6. Functionally, catalyzes the phosphorylation of the position 2 hydroxy group of 4-diphosphocytidyl-2C-methyl-D-erythritol. The protein is 4-diphosphocytidyl-2-C-methyl-D-erythritol kinase of Bifidobacterium longum (strain NCC 2705).